Reading from the N-terminus, the 176-residue chain is Translation initiation factor IF-3 (176 aa).

Belongs to the IF-3 family. Monomer.

It is found in the cytoplasm. Its function is as follows. IF-3 binds to the 30S ribosomal subunit and shifts the equilibrium between 70S ribosomes and their 50S and 30S subunits in favor of the free subunits, thus enhancing the availability of 30S subunits on which protein synthesis initiation begins. In Streptococcus uberis (strain ATCC BAA-854 / 0140J), this protein is Translation initiation factor IF-3.